We begin with the raw amino-acid sequence, 181 residues long: ABC transporter E family member 3 (181 aa).

The region spanning 20 to 176 is the ABC transporter domain; it reads SQIIVMLGEN…KAAFARFHNG (157 aa). ATP is bound at residue 27 to 34; it reads GENGTGKT.

This sequence belongs to the ABC transporter superfamily. ABCE family. Mostly expressed in roots and leaves, and, to a lower extent, in stems, flowers and siliques.

This chain is ABC transporter E family member 3 (ABCE3), found in Arabidopsis thaliana (Mouse-ear cress).